The primary structure comprises 455 residues: RQC trigger complex subunit RQT4 homolog (455 aa).

2 disordered regions span residues serine 64 to serine 98 and proline 118 to threonine 148. Composition is skewed to polar residues over residues threonine 65–serine 98 and alanine 119–serine 130. Serine 70 carries the phosphoserine modification. Serine 380 is subject to Phosphoserine.

Component of the RQT (ribosome quality control trigger) complex.

Its subcellular location is the cytoplasm. The protein resides in the cytosol. Functionally, probably functions as part of the RQC trigger (RQT) complex that activates the ribosome quality control (RQC) pathway, a pathway that degrades nascent peptide chains during problematic translation. The protein is RQC trigger complex subunit RQT4 homolog of Schizosaccharomyces pombe (strain 972 / ATCC 24843) (Fission yeast).